The chain runs to 337 residues: Glyceraldehyde-3-phosphate dehydrogenase (337 aa).

NAD(+) contacts are provided by residues 12-13 (RI), D34, R78, and T121. Residues 151–153 (SCT), T182, R199, 212–213 (SG), and R235 contribute to the D-glyceraldehyde 3-phosphate site. The Nucleophile role is filled by C152. N317 is an NAD(+) binding site.

Belongs to the glyceraldehyde-3-phosphate dehydrogenase family. Homotetramer.

Its subcellular location is the cytoplasm. The catalysed reaction is D-glyceraldehyde 3-phosphate + phosphate + NAD(+) = (2R)-3-phospho-glyceroyl phosphate + NADH + H(+). It participates in carbohydrate degradation; glycolysis; pyruvate from D-glyceraldehyde 3-phosphate: step 1/5. In terms of biological role, catalyzes the oxidative phosphorylation of glyceraldehyde 3-phosphate (G3P) to 1,3-bisphosphoglycerate (BPG) using the cofactor NAD. The first reaction step involves the formation of a hemiacetal intermediate between G3P and a cysteine residue, and this hemiacetal intermediate is then oxidized to a thioester, with concomitant reduction of NAD to NADH. The reduced NADH is then exchanged with the second NAD, and the thioester is attacked by a nucleophilic inorganic phosphate to produce BPG. The polypeptide is Glyceraldehyde-3-phosphate dehydrogenase (gap) (Lactococcus lactis subsp. lactis (strain IL1403) (Streptococcus lactis)).